The primary structure comprises 585 residues: A-type ATP synthase subunit A (585 aa).

Residue 231-238 (GPFGSGKT) coordinates ATP.

It belongs to the ATPase alpha/beta chains family. As to quaternary structure, has multiple subunits with at least A(3), B(3), C, D, E, F, H, I and proteolipid K(x).

The protein resides in the cell membrane. It catalyses the reaction ATP + H2O + 4 H(+)(in) = ADP + phosphate + 5 H(+)(out). In terms of biological role, component of the A-type ATP synthase that produces ATP from ADP in the presence of a proton gradient across the membrane. The A chain is the catalytic subunit. In Thermococcus onnurineus (strain NA1), this protein is A-type ATP synthase subunit A.